The sequence spans 223 residues: Adenine phosphoribosyltransferase (223 aa).

Belongs to the purine/pyrimidine phosphoribosyltransferase family. In terms of assembly, homodimer.

The protein resides in the cytoplasm. The enzyme catalyses AMP + diphosphate = 5-phospho-alpha-D-ribose 1-diphosphate + adenine. It functions in the pathway purine metabolism; AMP biosynthesis via salvage pathway; AMP from adenine: step 1/1. Its function is as follows. Catalyzes a salvage reaction resulting in the formation of AMP, that is energically less costly than de novo synthesis. The polypeptide is Adenine phosphoribosyltransferase (Mycobacterium bovis (strain ATCC BAA-935 / AF2122/97)).